Consider the following 475-residue polypeptide: Bifunctional protein HldE (475 aa).

The tract at residues 1 to 318 is ribokinase; it reads MMQYSPKFNN…ENAIHHREET (318 aa). 195-198 contributes to the ATP binding site; the sequence is NMSE. Aspartate 264 is an active-site residue. The cytidylyltransferase stretch occupies residues 344–475; the sequence is MTNGCFDILH…NVIKKIQASK (132 aa).

The protein in the N-terminal section; belongs to the carbohydrate kinase PfkB family. In the C-terminal section; belongs to the cytidylyltransferase family. As to quaternary structure, homodimer.

The catalysed reaction is D-glycero-beta-D-manno-heptose 7-phosphate + ATP = D-glycero-beta-D-manno-heptose 1,7-bisphosphate + ADP + H(+). The enzyme catalyses D-glycero-beta-D-manno-heptose 1-phosphate + ATP + H(+) = ADP-D-glycero-beta-D-manno-heptose + diphosphate. The protein operates within nucleotide-sugar biosynthesis; ADP-L-glycero-beta-D-manno-heptose biosynthesis; ADP-L-glycero-beta-D-manno-heptose from D-glycero-beta-D-manno-heptose 7-phosphate: step 1/4. It participates in nucleotide-sugar biosynthesis; ADP-L-glycero-beta-D-manno-heptose biosynthesis; ADP-L-glycero-beta-D-manno-heptose from D-glycero-beta-D-manno-heptose 7-phosphate: step 3/4. Its function is as follows. Catalyzes the phosphorylation of D-glycero-D-manno-heptose 7-phosphate at the C-1 position to selectively form D-glycero-beta-D-manno-heptose-1,7-bisphosphate. In terms of biological role, catalyzes the ADP transfer from ATP to D-glycero-beta-D-manno-heptose 1-phosphate, yielding ADP-D-glycero-beta-D-manno-heptose. The chain is Bifunctional protein HldE from Actinobacillus pleuropneumoniae serotype 5b (strain L20).